A 237-amino-acid chain; its full sequence is Uridylate kinase (237 aa).

10-13 (KLSG) serves as a coordination point for ATP. A UMP-binding site is contributed by glycine 51. Glycine 52 and arginine 56 together coordinate ATP. UMP contacts are provided by residues aspartate 71 and 132 to 139 (MGMPFFST). ATP is bound by residues asparagine 160, tyrosine 166, and aspartate 169.

This sequence belongs to the UMP kinase family. In terms of assembly, homohexamer.

The protein resides in the cytoplasm. It catalyses the reaction UMP + ATP = UDP + ADP. Its pathway is pyrimidine metabolism; CTP biosynthesis via de novo pathway; UDP from UMP (UMPK route): step 1/1. Inhibited by UTP. Its function is as follows. Catalyzes the reversible phosphorylation of UMP to UDP. The polypeptide is Uridylate kinase (Nocardioides sp. (strain ATCC BAA-499 / JS614)).